The following is a 319-amino-acid chain: Probable cytochrome c oxidase subunit 2 (319 aa).

The N-terminal stretch at 1-33 is a signal peptide; it reads MSPNGSDRSPRRPMRRKLLQALTAGLVLATATG. Helical transmembrane passes span 63–83 and 101–121; these read WAAALATGVLVWGLILWSVFF and LPIEALYTMVPLVIVSVLFYF. The Cu cation site is built by His227, Cys262, Cys266, and His270.

Belongs to the cytochrome c oxidase subunit 2 family. The cofactor is Cu cation. It depends on heme as a cofactor.

The protein localises to the cell membrane. The catalysed reaction is 4 Fe(II)-[cytochrome c] + O2 + 8 H(+)(in) = 4 Fe(III)-[cytochrome c] + 2 H2O + 4 H(+)(out). Its function is as follows. Subunits I and II form the functional core of the enzyme complex. Electrons originating in cytochrome c are transferred via heme a and Cu(A) to the binuclear center formed by heme a3 and Cu(B). This is Probable cytochrome c oxidase subunit 2 (ctaC) from Streptomyces coelicolor (strain ATCC BAA-471 / A3(2) / M145).